A 968-amino-acid chain; its full sequence is MPFTLGQRWISDTESELGLGTVVAMDARTVTLLFPSTGENRLYARSDSPVTRVMFNPGDTITSHEGWQLHIDEVKEENGLLVYVGTRLDTEETNVTLREVLLDSKLVFSKPQDRLFAGQIDRMDRFALRYRARKFQSEQYRMPYSGLRGQRTNLIPHQLNIAHDVGRRHAPRVLLADEVGLGKTIEAGMILHQQLLSGAAERVLIIVPETLQHQWLVEMLRRFNLRFALFDDERYTEAQHDAYNPFETEQLVICSLDFARRNKQRLEHLCDAEWDLLVVDEAHHLVWSTDAPSREYMAIEQLAERVPGVLLLTATPEQLGMESHFARLRLLDPNRFHDFEQFVEEQKNYRPVADAVAMLLAGNKLSNDELNRLGDLIGEQDIEPLLQAANSDRDDAQAARDELVSMLMDRHGTSRVLFRNTRNGVKGFPKRELHTVKLPLPTQYQTAIKVSGIMGARKSAEDRARDMLYPEQIYQEFEGDTGTWWNFDPRVEWLMGYLTSHRSQKVLVICAKATTALQLEQVLREREGIRAAVFHEGMSIIERDRAAAWFAEEDTGAQVLLCSEIGSEGRNFQFASNLVMFDLPFNPDLLEQRIGRLDRIGQAHDIQIHVPYLEKTAQSVLVRWYHEGLDAFEHTCPTGRAIYDSAYASLINYLAAPEETDGFDDLIKSCREQHEALKAQLEQGRDRLLEIHSNGGEKAQQLAQSIEEQDDDTNLIAFAMNLFDIVGINQDDRGDNLIVLTPSDHMLVPDFPGLPEDGCTITFERDVALSREDAQFITWEHPLIRNGLDLILSGDTGSSTISLLKNKALPVGTLLVELVYVVEAQAPKQLQLNRFLPPTPVRMLLDKNGNNLAAQVEFETFNRQLSAVNRHTGSKLVNAVQQDVHAILQLGETQIEKSARALIDNARREADEKLSGELSRLEALRAVNPNIRDDELAAIDSNRQQVLESLNQAGWRLDALRLIVVTHQ.

Residues 164–334 enclose the Helicase ATP-binding domain; it reads DVGRRHAPRV…FARLRLLDPN (171 aa). Residue 177 to 184 coordinates ATP; that stretch reads DEVGLGKT. Positions 280 to 283 match the DEAH box motif; sequence DEAH. In terms of domain architecture, Helicase C-terminal spans 490 to 685; the sequence is RVEWLMGYLT…ALKAQLEQGR (196 aa).

This sequence belongs to the SNF2/RAD54 helicase family. RapA subfamily. As to quaternary structure, interacts with the RNAP. Has a higher affinity for the core RNAP than for the holoenzyme. Its ATPase activity is stimulated by binding to RNAP.

Its function is as follows. Transcription regulator that activates transcription by stimulating RNA polymerase (RNAP) recycling in case of stress conditions such as supercoiled DNA or high salt concentrations. Probably acts by releasing the RNAP, when it is trapped or immobilized on tightly supercoiled DNA. Does not activate transcription on linear DNA. Probably not involved in DNA repair. This chain is RNA polymerase-associated protein RapA, found in Salmonella schwarzengrund (strain CVM19633).